The following is a 337-amino-acid chain: Protein XAP5 CIRCADIAN TIMEKEEPER (337 aa).

Residue serine 2 is modified to N-acetylserine. Coiled-coil stretches lie at residues 13 to 41 (QDAV…KSAS) and 72 to 121 (TREE…GSSR). Residues 23–37 (KQREAERKKIQELKS) show a composition bias toward basic and acidic residues. Residues 23–47 (KQREAERKKIQELKSKSASGNDQSG) are disordered. Positions 38–47 (KSASGNDQSG) are enriched in polar residues. The disordered stretch occupies residues 125–174 (AEDFENGSDEDDGENKSSGTGNLRCGKLGKDPSVETNFLPDSEREAEEQA). Residues 126-137 (EDFENGSDEDDG) show a composition bias toward acidic residues. Position 132 is a phosphoserine (serine 132). Residues 165–174 (DSEREAEEQA) are compositionally biased toward basic and acidic residues.

This sequence belongs to the FAM50 family. As to expression, expressed in leaves stems, flowers, roots, trichomes and hypocotyls.

Its subcellular location is the nucleus. Involved in light regulation of the circadian clock and photomorphogenesis. May play a global role in coordinating growth in response to the light environment. Acts as a light quality sensor directing both negative and positive transcriptional regulation. Inhibits growth in red light but promote growth in blue light. Inhibits clock gene expression in diurnal cycles. Plays no role in the control of flowering time. The polypeptide is Protein XAP5 CIRCADIAN TIMEKEEPER (XCT) (Arabidopsis thaliana (Mouse-ear cress)).